The chain runs to 86 residues: U2-sicaritoxin-Li1b (86 aa).

The signal sequence occupies residues 1–20; it reads MKIELFLVVIFALAIHMATA. A propeptide spanning residues 21–33 is cleaved from the precursor; the sequence is EEVIESDIEPAER. 4 disulfide bridges follow: cysteine 35-cysteine 53, cysteine 42-cysteine 62, cysteine 52-cysteine 71, and cysteine 64-cysteine 69. At lysine 85 the chain carries Lysine amide.

Belongs to the neurotoxin 39 family. In terms of tissue distribution, expressed by the venom gland.

It localises to the secreted. Its function is as follows. Toxin active against S.frugiperda larvae. May act on sodium channels (Nav). The polypeptide is U2-sicaritoxin-Li1b (Loxosceles intermedia (Brown spider)).